Consider the following 195-residue polypeptide: HTH-type transcriptional regulator BetI (195 aa).

Residues 8–68 (SIRRRQLIDA…ATMRDITSQL (61 aa)) enclose the HTH tetR-type domain. The segment at residues 31 to 50 (TIAQIARRAGVSTGIISHYF) is a DNA-binding region (H-T-H motif).

The protein operates within amine and polyamine biosynthesis; betaine biosynthesis via choline pathway [regulation]. Its function is as follows. Repressor involved in the biosynthesis of the osmoprotectant glycine betaine. It represses transcription of the choline transporter BetT and the genes of BetAB involved in the synthesis of glycine betaine. The polypeptide is HTH-type transcriptional regulator BetI (Escherichia coli O8 (strain IAI1)).